Consider the following 911-residue polypeptide: Pesticidal crystal protein Cry1Af (911 aa).

This sequence belongs to the delta endotoxin family.

Promotes colloidosmotic lysis by binding to the midgut epithelial cells of both dipteran and lepidopteran larvae. In Bacillus thuringiensis, this protein is Pesticidal crystal protein Cry1Af (cry1Af).